The following is a 75-amino-acid chain: ATP synthase subunit epsilon, mitochondrial (75 aa).

The N-terminal 9 residues, 1-9 (MIRRSCALL), are a transit peptide targeting the mitochondrion.

The protein belongs to the eukaryotic ATPase epsilon family. As to quaternary structure, F-type ATPases have 2 components, F(1) - the catalytic core - and F(o) - the membrane proton channel. F(1) has five subunits: alpha(3), beta(3), gamma(1), delta(1), epsilon(1), plus the additional subunit P18 (Tb427.05.1710) that is not present in F(1)F(o) ATP synthase from metazoa. Subunit P18 (Tb927.5.1710) interacts with the alpha subunit with a 1:1 stoichiometry; the interaction is direct. Subunit gamma is part of the central stalk. F(o) has three main subunits: a, b and c. The trypanosomal ATPase complex contains additional subunits that are not present in the F(1)F(o) ATP synthase from metazoa.

It is found in the mitochondrion. The protein localises to the mitochondrion inner membrane. Functionally, mitochondrial membrane ATP synthase (F(1)F(o) ATP synthase) produces ATP from ADP in the presence of a proton gradient across the membrane which is generated by electron transport complexes of the respiratory chain. F-type ATPases consist of two structural domains, F(1) - containing the extramembraneous catalytic core, and F(o) - containing the membrane proton channel, linked together by a central stalk and a peripheral stalk. During catalysis, ATP synthesis in the catalytic domain of F(1) is coupled via a rotary mechanism of the central stalk subunits to proton translocation. Subunits alpha and beta form the catalytic core in F(1). Rotation of the central stalk against the surrounding alpha(3)beta(3) subunits leads to hydrolysis of ATP in three separate catalytic sites on the beta subunits. Contrary to the procyclic, insect form that requires F(1)F(o) ATP synthase for ATP synthesis, the bloodstream form relies on ATP hydrolysis by F(1)F(o) ATP synthase to maintain its mitochondrial membrane potential. The protein is ATP synthase subunit epsilon, mitochondrial of Trypanosoma brucei brucei.